Consider the following 1754-residue polypeptide: Intraflagellar transport protein 172 homolog (1754 aa).

WD repeat units lie at residues 14–53 (EQIQRIAGLAWSPNQQRLAIATADRHILLYDDAGERRDKF), 64–103 (KNSYVIRGLAFSPDSTKLAVGQSDSIVYVYKLGESWNDKK), 110–149 (PQASAVTALIWLTSGSIIAGLEDGKVRALHSKSNKSQSLY), 151–190 (GDSICISLAANTKGTGFLSGHNDGTIIRYFMTDEATEPLG), 194–232 (QHPVPPFALAWPQGGFCAGGCDQRIVFYDSMGRQLRTFD), 283–322 (ACLYTLSSLLWRRDGARLALGSVSGAVLLFESVLRRTVWQ), and 519–557 (TLLSNISFVQWVPQSDVVVAQSNSNLAIWYNIDLPEHVT). TPR repeat units lie at residues 623 to 656 (KAMWHNLALIALEDGNLRVAQRCYAALGNVSKAY), 690 to 723 (GSDLRTAERIYLEQGDIESALKMYQQLGMWDEAV), 748 to 781 (SEQQEKAGQVLEEQGDLQQAMSLYMKANKPARAA), 807 to 840 (SELYELAGDIAHRLSRPEAALALYRKGGAYARAL), 852 to 885 (TALEEEWGDWLVSRKQLDASINHYIEAGATQKAL), 1041 to 1074 (RGKLKNAEMHFVASGDWKSAVHMYCSSGRWEDGY), 1140 to 1166 (DEVHLKIAMSLEDEGKFEAAEAEFLKA), 1167 to 1199 (NKPREAILMYQHAGDWQAALNVAENHLPDAVGE), 1211 to 1250 (TSNYKDYEALLLRAHRPDLIIEHYKQESLYEDALRIAEEH), 1282 to 1315 (SRSYLQKAAEFAKKEQFRKAAECLMQIDSSNAED), and 1698 to 1733 (FPVRGRQPVTFQGSSNQVNRDVWSKFSVALKMSPGS).

It belongs to the IFT172 family.

Its subcellular location is the cell projection. The protein resides in the cilium. Its function is as follows. Required for the maintenance and formation of cilia. In Drosophila melanogaster (Fruit fly), this protein is Intraflagellar transport protein 172 homolog.